Here is a 48-residue protein sequence, read N- to C-terminus: Cytochrome c oxidase subunit 2 (48 aa).

Topologically, residues 1–14 (MAHPAQLGLQDASS) are mitochondrial intermembrane. The chain crosses the membrane as a helical span at residues 15–45 (PIXEELLHFHEDALMIVFLISTLVLYIITTT). Residues 46–48 (VST) lie on the Mitochondrial matrix side of the membrane.

The protein belongs to the cytochrome c oxidase subunit 2 family. Component of the cytochrome c oxidase (complex IV, CIV), a multisubunit enzyme composed of 14 subunits. The complex is composed of a catalytic core of 3 subunits MT-CO1, MT-CO2 and MT-CO3, encoded in the mitochondrial DNA, and 11 supernumerary subunits COX4I, COX5A, COX5B, COX6A, COX6B, COX6C, COX7A, COX7B, COX7C, COX8 and NDUFA4, which are encoded in the nuclear genome. The complex exists as a monomer or a dimer and forms supercomplexes (SCs) in the inner mitochondrial membrane with NADH-ubiquinone oxidoreductase (complex I, CI) and ubiquinol-cytochrome c oxidoreductase (cytochrome b-c1 complex, complex III, CIII), resulting in different assemblies (supercomplex SCI(1)III(2)IV(1) and megacomplex MCI(2)III(2)IV(2)). Found in a complex with TMEM177, COA6, COX18, COX20, SCO1 and SCO2. Interacts with TMEM177 in a COX20-dependent manner. Interacts with COX20. Interacts with COX16. Cu cation serves as cofactor.

The protein localises to the mitochondrion inner membrane. It catalyses the reaction 4 Fe(II)-[cytochrome c] + O2 + 8 H(+)(in) = 4 Fe(III)-[cytochrome c] + 2 H2O + 4 H(+)(out). Functionally, component of the cytochrome c oxidase, the last enzyme in the mitochondrial electron transport chain which drives oxidative phosphorylation. The respiratory chain contains 3 multisubunit complexes succinate dehydrogenase (complex II, CII), ubiquinol-cytochrome c oxidoreductase (cytochrome b-c1 complex, complex III, CIII) and cytochrome c oxidase (complex IV, CIV), that cooperate to transfer electrons derived from NADH and succinate to molecular oxygen, creating an electrochemical gradient over the inner membrane that drives transmembrane transport and the ATP synthase. Cytochrome c oxidase is the component of the respiratory chain that catalyzes the reduction of oxygen to water. Electrons originating from reduced cytochrome c in the intermembrane space (IMS) are transferred via the dinuclear copper A center (CU(A)) of subunit 2 and heme A of subunit 1 to the active site in subunit 1, a binuclear center (BNC) formed by heme A3 and copper B (CU(B)). The BNC reduces molecular oxygen to 2 water molecules using 4 electrons from cytochrome c in the IMS and 4 protons from the mitochondrial matrix. This Polypterus sp. (Bichir) protein is Cytochrome c oxidase subunit 2 (mt-co2).